We begin with the raw amino-acid sequence, 198 residues long: Tumor necrosis factor alpha-induced protein 8 (198 aa).

Positions 49 to 83 (EVLDELYRVTKEYTQNKKEAEKIIKNLIKTVIKLA) form a coiled coil.

This sequence belongs to the TNFAIP8 family.

The protein resides in the cytoplasm. Acts as a negative mediator of apoptosis. Suppresses the TNF-mediated apoptosis by inhibiting caspase-8 activity but not the processing of procaspase-8, subsequently resulting in inhibition of BID cleavage and caspase-3 activation. This is Tumor necrosis factor alpha-induced protein 8 (TNFAIP8) from Bos taurus (Bovine).